Consider the following 557-residue polypeptide: Dihydroxy-acid dehydratase (557 aa).

Cys50 contributes to the [2Fe-2S] cluster binding site. Residue Asp82 participates in Mg(2+) binding. Residue Cys123 coordinates [2Fe-2S] cluster. The Mg(2+) site is built by Asp124 and Lys125. N6-carboxylysine is present on Lys125. Cys195 is a binding site for [2Fe-2S] cluster. Residue Glu447 participates in Mg(2+) binding. Residue Ser473 is the Proton acceptor of the active site.

This sequence belongs to the IlvD/Edd family. As to quaternary structure, homodimer. It depends on [2Fe-2S] cluster as a cofactor. Mg(2+) is required as a cofactor.

The catalysed reaction is (2R)-2,3-dihydroxy-3-methylbutanoate = 3-methyl-2-oxobutanoate + H2O. It catalyses the reaction (2R,3R)-2,3-dihydroxy-3-methylpentanoate = (S)-3-methyl-2-oxopentanoate + H2O. It functions in the pathway amino-acid biosynthesis; L-isoleucine biosynthesis; L-isoleucine from 2-oxobutanoate: step 3/4. It participates in amino-acid biosynthesis; L-valine biosynthesis; L-valine from pyruvate: step 3/4. In terms of biological role, functions in the biosynthesis of branched-chain amino acids. Catalyzes the dehydration of (2R,3R)-2,3-dihydroxy-3-methylpentanoate (2,3-dihydroxy-3-methylvalerate) into 2-oxo-3-methylpentanoate (2-oxo-3-methylvalerate) and of (2R)-2,3-dihydroxy-3-methylbutanoate (2,3-dihydroxyisovalerate) into 2-oxo-3-methylbutanoate (2-oxoisovalerate), the penultimate precursor to L-isoleucine and L-valine, respectively. The protein is Dihydroxy-acid dehydratase of Nitrosomonas europaea (strain ATCC 19718 / CIP 103999 / KCTC 2705 / NBRC 14298).